Here is a 970-residue protein sequence, read N- to C-terminus: MCADTTAETPEYKDTLNLPKTDFPMRAGLPAREPQWLERWEKIGVYDRLREKQGRAPFTLHDGPPYANGHLHIGHALNKTIKDMIVRSHQMMGFDARYVPGWDCHGLPIEWKIEEQYRKKGKSKDDVNVVEFRQECRRFAEGWIDIQREEFKRLGITGNWADPYVTMDYHAEAVIADEFMKFLMNGTLYQGSKPVMWSPIEQTALAEAEVEYHDKESFTIWVKFRAVNSGDLDGAQVVIWTTTPWTIPSNKAVVYGKDIAYGLYEITGTPEECWASVGDKYILADKLADDVMRRARLDPDMYRRVGDVDPSQIGGLTHPLHGAEGGNGEWDDIRDFRAAEFVTDTEGTGFVHCAPSHGMEEFELYRDLGMLEQVITYNVMDDGSFRADLPFFGGKYILSRKGGEGDANKTVIDKLVEVGGLLARGKIKHSYPHSWRSKAPIIYRNTPQWFASVDRPVNDGQDSYGKTIRERALTSIDQLVKFTPQTGRNRLYSMIEARPDWVLSRQRAWGVPLTCFTRKGALPTDADFLLRDPAVNARIFAAFEAEGADCWYAEGAKERFLGNDYKADEWDQVFDVLDVWFDSGSTHAFVLRDREDGTADGIADVYMEGTDQHRGWFHSSLLQACGTLGRAPYRNVVTHGFTLDEKGMKMSKSLGNTIVPDEVVKQYGADILRLWVAQTDYTADQRIGPEILKGVADSYRRLRNTMRFMLGSLSDFTEADRIEDPAEMPPLERWVLSRMAELDEQVRKGYAGFDFQGVYSAVFNFATVDLSAFYFDIRKDVLYCDGDTTRRRAARTVLDLLFHRLTTWLAPILVFTMEEVWLERYPGEGSSVHLVDFPETPASWRNPQNESNVARVRRVRRVVTAALEIQRRDKVIGSSLEAAPVVHVEDAETRALLAQIDIDDLCITSGLTVSADPAPAEAFRLPEIEGVGVVFEMAEGEKCQRCWKILPDVGRHAHAGVCGRCDAALG.

Residues 65–75 (PYANGHLHIGH) carry the 'HIGH' region motif. E608 provides a ligand contact to L-isoleucyl-5'-AMP. Positions 649-653 (KMSKS) match the 'KMSKS' region motif. K652 provides a ligand contact to ATP. Residues C943, C946, C962, and C965 each contribute to the Zn(2+) site.

Belongs to the class-I aminoacyl-tRNA synthetase family. IleS type 1 subfamily. Monomer. Zn(2+) is required as a cofactor.

It localises to the cytoplasm. It carries out the reaction tRNA(Ile) + L-isoleucine + ATP = L-isoleucyl-tRNA(Ile) + AMP + diphosphate. In terms of biological role, catalyzes the attachment of isoleucine to tRNA(Ile). As IleRS can inadvertently accommodate and process structurally similar amino acids such as valine, to avoid such errors it has two additional distinct tRNA(Ile)-dependent editing activities. One activity is designated as 'pretransfer' editing and involves the hydrolysis of activated Val-AMP. The other activity is designated 'posttransfer' editing and involves deacylation of mischarged Val-tRNA(Ile). This chain is Isoleucine--tRNA ligase, found in Ruegeria pomeroyi (strain ATCC 700808 / DSM 15171 / DSS-3) (Silicibacter pomeroyi).